We begin with the raw amino-acid sequence, 124 residues long: Large ribosomal subunit protein bL17 (124 aa).

This sequence belongs to the bacterial ribosomal protein bL17 family. As to quaternary structure, part of the 50S ribosomal subunit. Contacts protein L32.

This is Large ribosomal subunit protein bL17 from Persephonella marina (strain DSM 14350 / EX-H1).